A 458-amino-acid polypeptide reads, in one-letter code: Argininosuccinate lyase (458 aa).

Belongs to the lyase 1 family. Argininosuccinate lyase subfamily.

The protein resides in the cytoplasm. It catalyses the reaction 2-(N(omega)-L-arginino)succinate = fumarate + L-arginine. It functions in the pathway amino-acid biosynthesis; L-arginine biosynthesis; L-arginine from L-ornithine and carbamoyl phosphate: step 3/3. The sequence is that of Argininosuccinate lyase from Salmonella schwarzengrund (strain CVM19633).